We begin with the raw amino-acid sequence, 669 residues long: L-type lectin-domain containing receptor kinase V.9 (669 aa).

Residues 1-21 (MKFFVLVLLLVLQFFSNKALS) form the signal peptide. Residues 22-286 (QSEEGEFGFN…RDSRSTSVKK (265 aa)) are Extracellular-facing. A legume-lectin like region spans residues 38-259 (SGIAITNSKG…SHYILGWTFK (222 aa)). N-linked (GlcNAc...) asparagine glycosylation is found at asparagine 53, asparagine 75, asparagine 124, asparagine 206, and asparagine 261. The helical transmembrane segment at 287 to 307 (ILAISLSLTSLAILVFLTISY) threads the bilayer. At 308–669 (MLFLKRKKLM…FTEPFVSHGR (362 aa)) the chain is on the cytoplasmic side. Residues 344-603 (FRNSELLGKG…LGLFCSHPVA (260 aa)) form the Protein kinase domain. Residues 350 to 358 (LGKGGFGKV) and lysine 373 each bind ATP. Aspartate 469 functions as the Proton acceptor in the catalytic mechanism.

This sequence in the C-terminal section; belongs to the protein kinase superfamily. Ser/Thr protein kinase family. It in the N-terminal section; belongs to the leguminous lectin family.

The protein resides in the cell membrane. The enzyme catalyses L-seryl-[protein] + ATP = O-phospho-L-seryl-[protein] + ADP + H(+). It carries out the reaction L-threonyl-[protein] + ATP = O-phospho-L-threonyl-[protein] + ADP + H(+). The chain is L-type lectin-domain containing receptor kinase V.9 (LECRK59) from Arabidopsis thaliana (Mouse-ear cress).